We begin with the raw amino-acid sequence, 201 residues long: Probable GTP-binding protein EngB (201 aa).

Positions 22-197 (TFPEYAFIGR…LNYIESINKE (176 aa)) constitute an EngB-type G domain. Residues 30–37 (GRSNVGKS), 57–61 (GKTML), 75–78 (DLPG), 142–145 (TKAD), and 175–178 (ITSS) contribute to the GTP site. Mg(2+) is bound by residues S37 and T59.

The protein belongs to the TRAFAC class TrmE-Era-EngA-EngB-Septin-like GTPase superfamily. EngB GTPase family. Mg(2+) is required as a cofactor.

Functionally, necessary for normal cell division and for the maintenance of normal septation. The sequence is that of Probable GTP-binding protein EngB from Bacteroides fragilis (strain ATCC 25285 / DSM 2151 / CCUG 4856 / JCM 11019 / LMG 10263 / NCTC 9343 / Onslow / VPI 2553 / EN-2).